Here is a 201-residue protein sequence, read N- to C-terminus: Superoxide dismutase [Mn] (201 aa).

Residues His-27, His-81, Asp-163, and His-167 each coordinate Mn(2+).

The protein belongs to the iron/manganese superoxide dismutase family. As to quaternary structure, homodimer. Mn(2+) is required as a cofactor.

The protein localises to the secreted. It catalyses the reaction 2 superoxide + 2 H(+) = H2O2 + O2. Destroys superoxide anion radicals which are normally produced within the cells and which are toxic to biological systems. The polypeptide is Superoxide dismutase [Mn] (sodA) (Streptococcus pyogenes serotype M6 (strain ATCC BAA-946 / MGAS10394)).